The primary structure comprises 231 residues: Acyltransferase PGAP2 (231 aa).

Topologically, residues 1–22 (MQQVPYGSVDRDKPLIRVPFTR) are cytoplasmic. Residues 23–43 (LAVITVCLPLLGLVACIVLAM) form a helical membrane-spanning segment. Residues 44–78 (LYHYNDATYTHCQVPNYLPSISAAISLTPERYIWR) lie on the Lumenal side of the membrane. A helical membrane pass occupies residues 79–99 (FSIGLHSAPRFLVAAAYLSFY). At 100–110 (RGRFSRRLTEQ) the chain is on the cytoplasmic side. The helical transmembrane segment at 111–131 (LLSGFTFLLALSENVGLLLLT) threads the bilayer. Over 132-146 (YVSSTETYSVHKSGF) the chain is Lumenal. A helical membrane pass occupies residues 147–167 (ILFIGSSLFHMLCTCKLWSLI). Over 168–179 (VKYSISSEEMMS) the chain is Cytoplasmic. The helical transmembrane segment at 180–200 (YWFKLRLFLFNGGCCVLAVYF) threads the bilayer. Residues 201–231 (YRRHNTYCEEGITHASRCVSIWWCCPTWPST) are Lumenal-facing.

Belongs to the PGAP2 family.

It localises to the golgi apparatus membrane. Involved in the fatty acid remodeling steps of GPI-anchor maturation where the unsaturated acyl chain at sn-2 of inositol phosphate is replaced by a saturated stearoyl chain. May catalyze the second step of the fatty acid remodeling, by reacylating a lyso-GPI intermediate at sn-2 of inositol phosphate by a saturated chain. The fatty acid remodeling steps is critical for the integration of GPI-APs into lipid rafts. This is Acyltransferase PGAP2 from Danio rerio (Zebrafish).